A 511-amino-acid chain; its full sequence is MKCLLYLAFLSIGVNCKFTIVFPHNQKGTWKNVPSNYHYCPSSSDLNWHNDLIGTALQVKMPKSHKAIQADGWMCHASKWVTTCDFRWYGPKYITHSIRSFTPSVEQCRESIEQTKQGTWLNPGFPPQSCGYATVTDAEAVIVQVTPHHVLVDEYTGEWVDSQFINGKCSNDICPTVHNSTTWHSDYKVKGLCDSNLISMDITFFSEDGELSSLGKEGTGFRSNHFAYETGDKACKMQYCKHWGVRLPSGVWFEMADQDLFAAARFPECPEGSSISAPSQTSVDVSLIQDVERILDYSLCQETWSKIGAGLPISPVDLSYLAPKNPGTGPAFTIINGTLKYFETRYIRVDIAAPILSRMVGMISGTTTERELWDDWAPYEDVEIGPNGVLRTSSGYKFPLYMIGHGMLDSDLHLSSKAQVFEHPHIQDAASQLPDDETLFFGDTGLSKNPIELVEGWFSGWKSSIASFFFIIGLIIGLFLVLRVGIYLCIKLKHTKKRQIYTDIEMNRLGK.

Positions 1–16 are cleaved as a signal peptide; the sequence is MKCLLYLAFLSIGVNC. The Virion surface segment spans residues 17 to 467; the sequence is KFTIVFPHNQ…FSGWKSSIAS (451 aa). The trimerization stretch occupies residues 18 to 35; the sequence is FTIVFPHNQKGTWKNVPS. 6 cysteine pairs are disulfide-bonded: C40/C300, C75/C108, C84/C130, C169/C174, C193/C240, and C235/C269. The fusion peptide stretch occupies residues 53-172; that stretch reads IGTALQVKMP…QFINGKCSND (120 aa). N179 is a glycosylation site (N-linked (GlcNAc...) asparagine; by host). Residues 259 to 309 form a trimerization region; that stretch reads DLFAAARFPECPEGSSISAPSQTSVDVSLIQDVERILDYSLCQETWSKIGA. N336 carries N-linked (GlcNAc...) asparagine; by host glycosylation. Residues 383–405 form a trimerization region; sequence EIGPNGVLRTSSGYKFPLYMIGH. The chain crosses the membrane as a helical span at residues 468 to 488; it reads FFFIIGLIIGLFLVLRVGIYL. C489 is lipidated: S-palmitoyl cysteine; by host. The Intravirion segment spans residues 489 to 511; sequence CIKLKHTKKRQIYTDIEMNRLGK. Residues 496–506 carry the basolateral targeting ex vivo motif; sequence KKRQIYTDIEM.

This sequence belongs to the vesiculovirus glycoprotein family. In terms of assembly, homotrimer. Interacts with host LDL at target cell surface. Glycosylated by host. Palmitoylated by host.

The protein localises to the virion membrane. The protein resides in the host membrane. In terms of biological role, attaches the virus to host LDL receptors, inducing clathrin-dependent endocytosis of the virion. In the endosome, the acidic pH induces conformational changes in the glycoprotein trimer, which trigger fusion between virus and endosomal membrane. The chain is Glycoprotein (G) from Aedes (Bovine).